The chain runs to 425 residues: Kynurenine/alpha-aminoadipate aminotransferase, mitochondrial (425 aa).

The transit peptide at 1–29 (MNYARFITAASAARNPSPIRTMTDILSRG) directs the protein to the mitochondrion. A substrate-binding site is contributed by R20. An N6-acetyllysine modification is found at K69. The substrate site is built by Y74 and Y142. Position 179 is an N6-acetyllysine (K179). The segment at 181–208 (EDAKNPQKNTPKFLYTVPNGNNPTGNSL) is disordered. Positions 198–208 (PNGNNPTGNSL) are enriched in polar residues. A substrate-binding site is contributed by N202. Position 263 is an N6-(pyridoxal phosphate)lysine; alternate (K263). K263, K339, and K367 each carry N6-acetyllysine; alternate. N6-succinyllysine; alternate is present on residues K263, K339, and K367. Position 399 (R399) interacts with substrate. K422 is subject to N6-acetyllysine.

Belongs to the class-I pyridoxal-phosphate-dependent aminotransferase family. As to quaternary structure, homodimer. Requires pyridoxal 5'-phosphate as cofactor. In terms of tissue distribution, higher expression in the liver. Also found in heart, brain, kidney, pancreas, prostate, testis and ovary.

It is found in the mitochondrion. It carries out the reaction glycine + 2-oxoglutarate = glyoxylate + L-glutamate. The catalysed reaction is L-kynurenine + 2-oxoglutarate = kynurenate + L-glutamate + H2O. It catalyses the reaction L-kynurenine + glyoxylate = kynurenate + glycine + H2O. The enzyme catalyses 3-hydroxy-L-kynurenine + glyoxylate = xanthurenate + glycine + H2O. It carries out the reaction 2-oxohexanoate + L-kynurenine = L-2-aminohexanoate + kynurenate + H2O. The catalysed reaction is 3-phenylpyruvate + L-kynurenine = kynurenate + L-phenylalanine + H2O. It catalyses the reaction 4-methylsulfanyl-2-oxobutanoate + L-kynurenine = kynurenate + L-methionine + H2O. The enzyme catalyses 2-oxo-3-sulfanylpropanoate + L-kynurenine = kynurenate + L-cysteine + H2O. It carries out the reaction indole-3-pyruvate + L-kynurenine = kynurenate + L-tryptophan + H2O. The catalysed reaction is 2-oxopentanoate + L-kynurenine = L-2-aminopentanoate + kynurenate + H2O. It catalyses the reaction 4-methyl-2-oxopentanoate + L-kynurenine = kynurenate + L-leucine + H2O. The enzyme catalyses L-2-aminoadipate + 2-oxoglutarate = 2-oxoadipate + L-glutamate. It carries out the reaction glyoxylate + L-methionine = 4-methylsulfanyl-2-oxobutanoate + glycine. The catalysed reaction is L-2-aminoadipate + glyoxylate = 2-oxoadipate + glycine. It catalyses the reaction L-tyrosine + glyoxylate = 3-(4-hydroxyphenyl)pyruvate + glycine. The enzyme catalyses glyoxylate + L-phenylalanine = 3-phenylpyruvate + glycine. It carries out the reaction L-tryptophan + glyoxylate = indole-3-pyruvate + glycine. The catalysed reaction is L-leucine + glyoxylate = 4-methyl-2-oxopentanoate + glycine. It catalyses the reaction 2-oxobutanoate + L-kynurenine = (2S)-2-aminobutanoate + kynurenate + H2O. The enzyme catalyses 2-oxoadipate + L-kynurenine = L-2-aminoadipate + kynurenate + H2O. Its pathway is amino-acid degradation; L-lysine degradation via saccharopine pathway; glutaryl-CoA from L-lysine: step 4/6. Its activity is regulated as follows. Kynurenine transaminase activity is competitively inhibited by aminoadipate, asparagine, glutamate, histidine, cysteine, lysine, 3-hydroxy-kynurenine and phenylalanine. Functionally, transaminase with broad substrate specificity. Has transaminase activity towards aminoadipate, kynurenine, methionine and glutamate. Shows activity also towards tryptophan, aspartate and hydroxykynurenine. Accepts a variety of oxo-acids as amino-group acceptors, with a preference for 2-oxoglutarate, 2-oxocaproic acid, phenylpyruvate and alpha-oxo-gamma-methiol butyric acid. Can also use glyoxylate as amino-group acceptor (in vitro). This Homo sapiens (Human) protein is Kynurenine/alpha-aminoadipate aminotransferase, mitochondrial.